We begin with the raw amino-acid sequence, 300 residues long: N-acetylmuramic acid 6-phosphate etherase (300 aa).

Residues 57–220 enclose the SIS domain; that stretch reads VSAAFARQGR…SSAAMIRSGK (164 aa). Glu85 serves as the catalytic Proton donor. The active site involves Glu116.

It belongs to the GCKR-like family. MurNAc-6-P etherase subfamily. In terms of assembly, homodimer.

The catalysed reaction is N-acetyl-D-muramate 6-phosphate + H2O = N-acetyl-D-glucosamine 6-phosphate + (R)-lactate. It participates in amino-sugar metabolism; N-acetylmuramate degradation. The protein operates within amino-sugar metabolism; 1,6-anhydro-N-acetylmuramate degradation. Its pathway is cell wall biogenesis; peptidoglycan recycling. In terms of biological role, specifically catalyzes the cleavage of the D-lactyl ether substituent of MurNAc 6-phosphate, producing GlcNAc 6-phosphate and D-lactate. Together with AnmK, is also required for the utilization of anhydro-N-acetylmuramic acid (anhMurNAc) either imported from the medium or derived from its own cell wall murein, and thus plays a role in cell wall recycling. This chain is N-acetylmuramic acid 6-phosphate etherase, found in Edwardsiella ictaluri (strain 93-146).